A 768-amino-acid polypeptide reads, in one-letter code: MSRKVTKYSAVLAVSLFAAALAGCGSENKEGTVGTGPGGVATVGDTACVQCHSAVVDPLTGESIITQYTRSFHYSKGVGCEGCHGGGAQHNGVGPLPFPLAGQSEAQIAARCASCHNGVIAPLSSSPNFVNGNHANPFGGEEAKENLCSRCHSHEGAIFGAQAGFTGDGNILRNAAYQPVYPQDPETFNVMTCATCHQHGGAQRQVFTQISTAGVPNSRRTVAWDPNRNSINDQYDLCTSCHTVNTMTGTLIGSGNVLQIFTSNAVGSGTKSVTTAPFYHNTRWFRTLPSTHYDFPESKTTASGTTIEGYVIRRNTANPCFDCHGHEFQTNTRRLAGADRPNTIFLDWGQSAHGGKLLQAKVAAAALASSGAAEVDDVMKAGATDATAPGWTHYNWDDTASRGACQRCHTSTGASNFLNNPAGYDRTGAGNSFTHLAGWTSSNKRSDQNELLYCWGCHTKAGTGELRNPGAITEVYPGINSTSTGTTGLDVTVSYPDIKGSNVCMGCHLGREVGDNIKAITDADGILGFVNSHYLTAGGQLFGTTGYEYATRSYANPAFFQHDKIGTAAAPGTGTNGPCAGCHMTTPTSHLFLPVTKDGTGAITAITSTACVTCHAGTFALTPEGLTAEEEEYVASLEALKAALAGKGILFFNAHPYFYRDTNANGIADPGETVSSNAFTNWAGVYGLALWQDVMGAAFNANLLIHDPGGYAHNRFYSKRLIWDSIDFIFDGVLNNDVTAAIDAQVTAARLDSATATAAKAYLGATRP.

Residues 1 to 23 (MSRKVTKYSAVLAVSLFAAALAG) form the signal peptide. A lipid anchor (N-palmitoyl cysteine) is attached at cysteine 24. The S-diacylglycerol cysteine moiety is linked to residue cysteine 24. Positions 48, 51, 52, 80, 83, 84, 112, 115, 116, 148, 151, 152, 193, 196, 197, 238, 241, 242, 320, 323, 324, 405, 408, 409, 454, 457, 458, 504, 507, 508, 579, 582, 583, 611, 614, and 615 each coordinate heme c.

Binds 12 heme c groups per subunit.

Its subcellular location is the cell outer membrane. In terms of biological role, not involved in Fe(3+) reduction. The chain is C-type polyheme cytochrome OmcC (omcC) from Geobacter sulfurreducens (strain ATCC 51573 / DSM 12127 / PCA).